The following is a 68-amino-acid chain: Large ribosomal subunit protein bL31 (68 aa).

Zn(2+)-binding residues include C16, C18, C36, and C39.

This sequence belongs to the bacterial ribosomal protein bL31 family. Type A subfamily. In terms of assembly, part of the 50S ribosomal subunit. Zn(2+) serves as cofactor.

Binds the 23S rRNA. The polypeptide is Large ribosomal subunit protein bL31 (Sorangium cellulosum (strain So ce56) (Polyangium cellulosum (strain So ce56))).